The primary structure comprises 554 residues: Calcium-dependent protein kinase 3 (554 aa).

The interval 30–55 (KKKSSNKSIKSQHKFEGSKIANKNNE) is disordered. The Protein kinase domain maps to 110-365 (NLSEEPLGKG…ASEALKHPWF (256 aa)). Residues 116–124 (LGKGTYGCV) and K139 contribute to the ATP site. D230 serves as the catalytic Proton acceptor. The short motif at 385–393 (NFKNYALLL) is the J domain autoinhibitory motif element. A j domain region spans residues 385-420 (NFKNYALLLKLQKLAMTIIAQQSNDYDLQQLKTVFL). The short motif at 394–403 (KLQKLAMTII) is the J domain EF-hand interaction motif element. EF-hand domains follow at residues 410-445 (YDLQ…SGLK), 448-479 (QNFD…DRKH), 480-515 (LSKK…GNKK), and 521-554 (KDVN…KLKY). Ca(2+)-binding residues include D458, D460, S462, R464, E469, D493, D495, D497, E499, E504, D534, N536, D538, K540, and E545.

This sequence belongs to the protein kinase superfamily. Ser/Thr protein kinase family. CDPK subfamily. Mg(2+) is required as a cofactor.

It localises to the cytoplasm. The enzyme catalyses L-seryl-[protein] + ATP = O-phospho-L-seryl-[protein] + ADP + H(+). It carries out the reaction L-threonyl-[protein] + ATP = O-phospho-L-threonyl-[protein] + ADP + H(+). Its activity is regulated as follows. Activated by calcium. Upon calcium binding to the EF-hand domain 2, the C-terminus of the junction domain (J domain) undergoes a conformational change which results in the dissociation of the pseudo-substrate inhibitory motif from the catalytic domain. This, in turn, may facilitate the autophosphorylation of the activation loop at Thr-271, which leads to the kinase activation. Functionally, calcium-dependent protein kinase which acts as a sensor and effector of intracellular Ca(2+) levels probably in part downstream of cGMP-activated PKG kinase. In the mosquito midgut, regulates the gliding motility of the ookinete which is essential for the ookinete to invade the midgut epithelium. However, another study showed that while required for ookinete invasion of the midgut epithelium, is not required for ookinete gliding motility. The polypeptide is Calcium-dependent protein kinase 3 (Plasmodium berghei (strain Anka)).